Here is a 664-residue protein sequence, read N- to C-terminus: Intraflagellar transport protein 70A2 (664 aa).

7 TPR repeats span residues 11–44, 45–78, 153–186, 188–220, 395–423, 424–456, and 458–491; these read DGEF…SPRS, RAGL…HPEL, PDGL…SGYQ, DVSY…GIRQ, QVQE…EKYI, PVLM…CNDH, and VWKL…NYDN. A coiled-coil region spans residues 507–534; the sequence is YIMTSQNEEAEELMRKIEKEEEQLSYGD. The stretch at 543–576 is one TPR 8 repeat; the sequence is CIVNLVIGTLYCAKGNYDFGISRVIKSLEPYHKK.

The protein belongs to the TTC30/dfy-1/fleer family. In terms of assembly, interacts wit the IFT B complex component IFT52.

Its subcellular location is the cell projection. It localises to the cilium. Required for polyglutamylation of axonemal tubulin. Plays a role in anterograde intraflagellar transport (IFT), the process by which cilia precursors are transported from the base of the cilium to the site of their incorporation at the tip. The polypeptide is Intraflagellar transport protein 70A2 (Ift70a2) (Rattus norvegicus (Rat)).